Consider the following 209-residue polypeptide: Uracil phosphoribosyltransferase (209 aa).

5-phospho-alpha-D-ribose 1-diphosphate is bound by residues R78, R103, and 130 to 138 (DPMLATAGS). Uracil-binding positions include I193 and 198–200 (GDA). D199 is a 5-phospho-alpha-D-ribose 1-diphosphate binding site.

The protein belongs to the UPRTase family. It depends on Mg(2+) as a cofactor.

The enzyme catalyses UMP + diphosphate = 5-phospho-alpha-D-ribose 1-diphosphate + uracil. It functions in the pathway pyrimidine metabolism; UMP biosynthesis via salvage pathway; UMP from uracil: step 1/1. Its activity is regulated as follows. Allosterically activated by GTP. In terms of biological role, catalyzes the conversion of uracil and 5-phospho-alpha-D-ribose 1-diphosphate (PRPP) to UMP and diphosphate. The chain is Uracil phosphoribosyltransferase from Methylibium petroleiphilum (strain ATCC BAA-1232 / LMG 22953 / PM1).